Reading from the N-terminus, the 186-residue chain is Hydra actinoporin-like toxin 6 (186 aa).

The N-terminal stretch at 1–21 (MLVYVCLVVILIQLPFGAAGG) is a signal peptide. The short motif at 158–160 (RAG) is the Cell attachment site element.

Belongs to the actinoporin family. HALT subfamily. In terms of assembly, octamer or nonamer in membranes. Monomer in the soluble state. In vitro, interacts with folate receptor alpha (of target organism). As to expression, expressed female germline during oogenesis.

The protein resides in the nematocyst. It localises to the secreted. The protein localises to the target cell membrane. In terms of biological role, pore-forming protein that forms hydrophilic pores and causes cytolysis. Compared to equinatoxin-2 (AC P61914), it reveals lower cytolysis activity (5-12-fold difference, tested on erythrocytes), a larger pore size (probably 2-3 nm) and different affinity to membrane lipids (100-fold lower affinity to sphingomyelin). Binds to sulfatides. Shows cytolytic activity on HeLa cells, with a different potency than its paralogs (from most potent to less potent: HALT-4&gt;HALT-6~HALT-1&gt;HALT-3&gt;HALT-7&gt;HALT-2). Pore formation is a multi-step process that involves specific recognition of membrane lipid by a protein aromatic residues rich region, firm binding to the membrane (mainly driven by hydrophobic interactions) accompanied by the transfer of the N-terminal region to the lipid-water interface and finally pore formation after oligomerization of monomers. In vitro, binds to the folate receptor alpha (FOLR1), a GPI-anchored membrane protein that plays a major role in the uptake of folate/folic acid into cells via endocytosis, suggesting a possible involvement of this receptor in the mechanism of HALT-1-induced cell lysis. In vivo, does not cause visible paralysis in larvae of the blowfly Sarcophaga faculata, the most common arthropod prey of Hydra. This Hydra vulgaris (Hydra) protein is Hydra actinoporin-like toxin 6.